A 79-amino-acid chain; its full sequence is MGEFSLTHILLLAVIFLIFFGPSRLPQLGQSMGKAIRGFKQGLNEIDVDAKDIHDNQQVSHQNKQSMGQTQKQGENQNS.

The chain crosses the membrane as a helical span at residues 1 to 21 (MGEFSLTHILLLAVIFLIFFG). Residues 52-79 (DIHDNQQVSHQNKQSMGQTQKQGENQNS) form a disordered region. Polar residues predominate over residues 56 to 79 (NQQVSHQNKQSMGQTQKQGENQNS).

It belongs to the TatA/E family. As to quaternary structure, the Tat system comprises two distinct complexes: a TatABC complex, containing multiple copies of TatA, TatB and TatC subunits, and a separate TatA complex, containing only TatA subunits. Substrates initially bind to the TatABC complex, which probably triggers association of the separate TatA complex to form the active translocon.

The protein localises to the cell inner membrane. Part of the twin-arginine translocation (Tat) system that transports large folded proteins containing a characteristic twin-arginine motif in their signal peptide across membranes. TatA could form the protein-conducting channel of the Tat system. This is Sec-independent protein translocase protein TatA from Bdellovibrio bacteriovorus (strain ATCC 15356 / DSM 50701 / NCIMB 9529 / HD100).